The sequence spans 477 residues: MVRVRLAPSPTGTLHIGTARTAVFNWLYAKSQNGDFLLRIEDTDKERSKPEFTQNILEGLQWLGIDWAEDPVIQSERVAQHRDAIRALLEKGLAYRCYANESELATMRDAQKASNQPPRYDNRHRNLTKEQETAYQAEGRDAVIRFRIDDDADIHWNDLVRGTMRWRGGDLGGDMVVARRAPADQIGDPLYNLVVVVDDAAMEITHVIRGEDHIANTAKQLLLYEALGLPSPTFAHAPLILNADGKKLSKRDGVTSINEFRSMGYTAEAIANYMTLLGWSVPEGMEERFTLREAADQFSFDRVNKAGARFDWDKLNWLNAQVLHSWSSAQLLDVLRPLWLKNGWTIPNDNGWALELCELLGPSLTLLNDGLDQAAPFFECPDLEDDGLKQLQSEGAKAAISHLIDALQAERWMGTDFDQAQTLLGDAAKAAGVKKGVMMKSLRAALLGRLQGPDLLTTWSLLAKNSDDLPRLQRCLS.

Positions 8–18 match the 'HIGH' region motif; the sequence is PSPTGTLHIGT. The 'KMSKS' region signature appears at 247 to 251; that stretch reads KLSKR. Lys-250 lines the ATP pocket.

The protein belongs to the class-I aminoacyl-tRNA synthetase family. Glutamate--tRNA ligase type 1 subfamily. Monomer.

The protein localises to the cytoplasm. The catalysed reaction is tRNA(Glu) + L-glutamate + ATP = L-glutamyl-tRNA(Glu) + AMP + diphosphate. In terms of biological role, catalyzes the attachment of glutamate to tRNA(Glu) in a two-step reaction: glutamate is first activated by ATP to form Glu-AMP and then transferred to the acceptor end of tRNA(Glu). This Synechococcus sp. (strain CC9902) protein is Glutamate--tRNA ligase.